A 379-amino-acid chain; its full sequence is Glucose-insensitive transcription protein 7 (379 aa).

Positions 181-272 (SNRIRYDWSQ…VSEIKWEALV (92 aa)) constitute a CS domain. In terms of domain architecture, SGS spans 292–379 (ASGNTKNKAK…PPQGMEPKKF (88 aa)). The tract at residues 345 to 379 (SYTESNGTALSTNWKDVKSKTFETKPPQGMEPKKF) is disordered. A compositionally biased stretch (polar residues) spans 346–358 (YTESNGTALSTNW).

In terms of biological role, involved in cyclic AMP (cAMP) pathway, possibly by participating in the assembly or the conformational activation of specific multiprotein complexes. The polypeptide is Glucose-insensitive transcription protein 7 (git7) (Schizosaccharomyces pombe (strain 972 / ATCC 24843) (Fission yeast)).